A 184-amino-acid chain; its full sequence is Luciferin-binding protein (184 aa).

EF-hand domains follow at residues 10–45 (YHLRKMKTRMKRVDVTGDGFISREDYELIAVRIAKI), 46–81 (AKLSAEKAEETRQEFLRVADQLGLAPGVRISVEEAA), 98–133 (MAVIQSLIMYDCIDTDKDGYVSLPEFKAFLQAVGPD), and 134–169 (ITDDKAITCFNTLDFNKNGQISRDEFLVTVNDFLFG). Ca(2+)-binding residues include Asp111, Asp113, Asp115, Tyr117, Glu122, Asp147, Asn149, Asn151, Gln153, and Glu158.

This Ca(2+)-dependent protein binds to luciferin. The luciferin of LBP is capable of reacting with luciferase and O(2) only when calcium is bound. The polypeptide is Luciferin-binding protein (Renilla reniformis (Sea pansy)).